Here is a 1117-residue protein sequence, read N- to C-terminus: Centrosomal protein of 126 kDa (1117 aa).

The tract at residues 1 to 42 (MLAGRPGTRSAVGELGTESSDNLDRAPLGPRESGGHHRPGSY) is disordered. Positions 49–121 (LEKNLEEERQ…EEVTEKFQRA (73 aa)) form a coiled coil. Disordered stretches follow at residues 643–664 (AENS…QQFH) and 730–759 (KKEE…IIRK). Basic and acidic residues predominate over residues 730–744 (KKEESKIPVHDDSKT). The segment covering 745–758 (KQGKPQRGRAKIIR) has biased composition (basic residues).

As to quaternary structure, interacts with DCTN1. In terms of tissue distribution, expressed in brain, lung, skeletal muscle, kidney, pancreas, testis and ovary.

Its subcellular location is the midbody. The protein resides in the cytoplasm. It localises to the cytoskeleton. The protein localises to the microtubule organizing center. It is found in the centrosome. Its subcellular location is the cilium basal body. In terms of biological role, participates in cytokinesis. Necessary for microtubules and mitotic spindle organization. Involved in primary cilium formation. The protein is Centrosomal protein of 126 kDa of Homo sapiens (Human).